Here is a 352-residue protein sequence, read N- to C-terminus: MDYQTSTPLYDIDYGMSEPCQKLNVRQIAARLLPPLYSLVFIFGFVGNMLVVLILINCKKLKSMTDIYLLNLAISDLLFIITIPFWAHYAADQWVFGNTMCQLFTGFYFIGYFGGIFFIILLTIDRYLAIVHAVFALKARTVTFGAATSVVTWVVAVFASLPGIIFTKSQKEGSRHTCSPHFPSSQYHFWKNFQTLKIVILGLVLPLLVMIVCYSGIIKTLLRCRNEKKKHKAVRLIFVIMIVYFLFWAPYNIVLLLSTFQEFFGLNNCSGSNRLDQAMQVTETLGMTHCCINPIIYAFVGEKFRNYLLRFFRKYFASRFCKGCPVFQGEAPERVSSVYTRSTGEQEISVGL.

Residues 1 to 30 (MDYQTSTPLYDIDYGMSEPCQKLNVRQIAA) lie on the Extracellular side of the membrane. The residue at position 3 (tyrosine 3) is a Sulfotyrosine. Serine 6 carries O-linked (GalNAc...) serine glycosylation. A sulfotyrosine mark is found at tyrosine 10 and tyrosine 14. Intrachain disulfides connect cysteine 20/cysteine 269 and cysteine 101/cysteine 178. The chain crosses the membrane as a helical span at residues 31 to 58 (RLLPPLYSLVFIFGFVGNMLVVLILINC). Residues 59 to 68 (KKLKSMTDIY) are Cytoplasmic-facing. Residues 69 to 89 (LLNLAISDLLFIITIPFWAHY) form a helical membrane-spanning segment. At 90-102 (AADQWVFGNTMCQ) the chain is on the extracellular side. The helical transmembrane segment at 103 to 124 (LFTGFYFIGYFGGIFFIILLTI) threads the bilayer. The Cytoplasmic portion of the chain corresponds to 125-141 (DRYLAIVHAVFALKART). Residues 142–166 (VTFGAATSVVTWVVAVFASLPGIIF) form a helical membrane-spanning segment. Topologically, residues 167–198 (TKSQKEGSRHTCSPHFPSSQYHFWKNFQTLKI) are extracellular. The chain crosses the membrane as a helical span at residues 199–218 (VILGLVLPLLVMIVCYSGII). At 219–235 (KTLLRCRNEKKKHKAVR) the chain is on the cytoplasmic side. Residues 236–260 (LIFVIMIVYFLFWAPYNIVLLLSTF) form a helical membrane-spanning segment. The Extracellular portion of the chain corresponds to 261 to 277 (QEFFGLNNCSGSNRLDQ). Residues 278–301 (AMQVTETLGMTHCCINPIIYAFVG) form a helical membrane-spanning segment. Over 302 to 352 (EKFRNYLLRFFRKYFASRFCKGCPVFQGEAPERVSSVYTRSTGEQEISVGL) the chain is Cytoplasmic. 2 S-palmitoyl cysteine lipidation sites follow: cysteine 321 and cysteine 324. Residues serine 336, serine 337, serine 342, and serine 349 each carry the phosphoserine; by BARK1 modification.

This sequence belongs to the G-protein coupled receptor 1 family. Interacts with PRAF2. Efficient ligand binding to CCL3/MIP-1alpha and CCL4/MIP-1beta requires sulfation, O-glycosylation and sialic acid modifications. Glycosylation on Ser-6 is required for efficient binding of CCL4. Interacts with GRK2. Interacts with ARRB1 and ARRB2. Interacts with CNIH4. Interacts with S100A4; this interaction stimulates T-lymphocyte chemotaxis. Sulfated on at least 2 of the N-terminal tyrosines. Sulfation is required for efficient binding of the chemokines, CCL3 and CCL4. Post-translationally, O-glycosylated, but not N-glycosylated. Ser-6 appears to be the major site. Also sialylated glycans present which contribute to chemokine binding. Ser-17 may also be glycosylated and, if so, with small moieties such as a T-antigen. In terms of processing, palmitoylation in the C-terminal is important for cell surface expression. Phosphorylation on serine residues in the C-terminal is stimulated by binding CC chemokines especially by APO-RANTES.

Its subcellular location is the cell membrane. Receptor for a number of inflammatory CC-chemokines including CCL3/MIP-1-alpha, CCL4/MIP-1-beta and RANTES and subsequently transduces a signal by increasing the intracellular calcium ion level. May play a role in the control of granulocytic lineage proliferation or differentiation. Participates in T-lymphocyte migration to the infection site by acting as a chemotactic receptor. This is C-C chemokine receptor type 5 (CCR5) from Bos taurus (Bovine).